A 350-amino-acid chain; its full sequence is Uroporphyrinogen decarboxylase (350 aa).

Substrate contacts are provided by residues 28–32 (RQAGR), F47, D78, Y155, S210, and H325.

The protein belongs to the uroporphyrinogen decarboxylase family. In terms of assembly, homodimer.

The protein resides in the cytoplasm. The enzyme catalyses uroporphyrinogen III + 4 H(+) = coproporphyrinogen III + 4 CO2. It functions in the pathway porphyrin-containing compound metabolism; protoporphyrin-IX biosynthesis; coproporphyrinogen-III from 5-aminolevulinate: step 4/4. Functionally, catalyzes the decarboxylation of four acetate groups of uroporphyrinogen-III to yield coproporphyrinogen-III. The chain is Uroporphyrinogen decarboxylase from Synechocystis sp. (strain ATCC 27184 / PCC 6803 / Kazusa).